Here is a 961-residue protein sequence, read N- to C-terminus: Glycine dehydrogenase (decarboxylating) (961 aa).

Position 709 is an N6-(pyridoxal phosphate)lysine (Lys709).

The protein belongs to the GcvP family. As to quaternary structure, the glycine cleavage system is composed of four proteins: P, T, L and H. The cofactor is pyridoxal 5'-phosphate.

The enzyme catalyses N(6)-[(R)-lipoyl]-L-lysyl-[glycine-cleavage complex H protein] + glycine + H(+) = N(6)-[(R)-S(8)-aminomethyldihydrolipoyl]-L-lysyl-[glycine-cleavage complex H protein] + CO2. The glycine cleavage system catalyzes the degradation of glycine. The P protein binds the alpha-amino group of glycine through its pyridoxal phosphate cofactor; CO(2) is released and the remaining methylamine moiety is then transferred to the lipoamide cofactor of the H protein. This chain is Glycine dehydrogenase (decarboxylating), found in Streptomyces griseus subsp. griseus (strain JCM 4626 / CBS 651.72 / NBRC 13350 / KCC S-0626 / ISP 5235).